A 475-amino-acid chain; its full sequence is Glycogen synthase (475 aa).

Lysine 15 contacts ADP-alpha-D-glucose.

The protein belongs to the glycosyltransferase 1 family. Bacterial/plant glycogen synthase subfamily.

It catalyses the reaction [(1-&gt;4)-alpha-D-glucosyl](n) + ADP-alpha-D-glucose = [(1-&gt;4)-alpha-D-glucosyl](n+1) + ADP + H(+). It functions in the pathway glycan biosynthesis; glycogen biosynthesis. In terms of biological role, synthesizes alpha-1,4-glucan chains using ADP-glucose. The protein is Glycogen synthase of Chlamydia felis (strain Fe/C-56) (Chlamydophila felis).